Reading from the N-terminus, the 98-residue chain is Keratin, high sulfur matrix protein, IIIB3 (98 aa).

At Ala-1 the chain carries N-acetylalanine.

This sequence belongs to the KRTAP type 3 family. As to quaternary structure, interacts with wool keratins. In terms of tissue distribution, wool.

In the wool cortex, wool keratin intermediate filaments are embedded in an interfilamentous matrix, consisting of hair keratin-associated proteins (KRTAP), which are essential for the formation of a rigid and resistant wool shaft through their extensive disulfide bond cross-linking with abundant cysteine residues of wool keratins. The matrix proteins include the high-sulfur and high-glycine-tyrosine keratins. The protein is Keratin, high sulfur matrix protein, IIIB3 of Ovis aries (Sheep).